The sequence spans 445 residues: Argininosuccinate synthase (445 aa).

Residues 17-25 (AFSGGLDTS) and A43 each bind ATP. L-citrulline is bound at residue Y99. Residues G129 and T131 each contribute to the ATP site. 3 residues coordinate L-aspartate: T131, N135, and D136. N135 is a binding site for L-citrulline. D136 is a binding site for ATP. Positions 139 and 192 each coordinate L-citrulline. ATP is bound at residue D194. Positions 201, 203, and 280 each coordinate L-citrulline.

The protein belongs to the argininosuccinate synthase family. Type 2 subfamily. As to quaternary structure, homotetramer.

The protein localises to the cytoplasm. It catalyses the reaction L-citrulline + L-aspartate + ATP = 2-(N(omega)-L-arginino)succinate + AMP + diphosphate + H(+). Its pathway is amino-acid biosynthesis; L-arginine biosynthesis; L-arginine from L-ornithine and carbamoyl phosphate: step 2/3. The polypeptide is Argininosuccinate synthase (Acidobacterium capsulatum (strain ATCC 51196 / DSM 11244 / BCRC 80197 / JCM 7670 / NBRC 15755 / NCIMB 13165 / 161)).